Consider the following 671-residue polypeptide: UvrABC system protein B (671 aa).

Residues 25–412 form the Helicase ATP-binding domain; sequence EGIDAGLAHQ…AGRIVEQVVR (388 aa). Position 38–45 (38–45) interacts with ATP; the sequence is GVTGSGKT. Positions 91 to 114 match the Beta-hairpin motif; sequence YYDYYQPEAYVPSSDTFIEKDASI. In terms of domain architecture, Helicase C-terminal spans 429–582; it reads QVDDLLSEIH…QIAFNLEHGI (154 aa). Residues 601–625 are disordered; the sequence is PGSRSKKRKGMAKAAEESARYENEL. Basic and acidic residues predominate over residues 614–625; it reads AAEESARYENEL. The region spanning 632–667 is the UVR domain; sequence NKRIRQLEEKMYQLARDLEFEAAAQMRDEIGKLRER.

The protein belongs to the UvrB family. As to quaternary structure, forms a heterotetramer with UvrA during the search for lesions. Interacts with UvrC in an incision complex.

The protein localises to the cytoplasm. Its function is as follows. The UvrABC repair system catalyzes the recognition and processing of DNA lesions. A damage recognition complex composed of 2 UvrA and 2 UvrB subunits scans DNA for abnormalities. Upon binding of the UvrA(2)B(2) complex to a putative damaged site, the DNA wraps around one UvrB monomer. DNA wrap is dependent on ATP binding by UvrB and probably causes local melting of the DNA helix, facilitating insertion of UvrB beta-hairpin between the DNA strands. Then UvrB probes one DNA strand for the presence of a lesion. If a lesion is found the UvrA subunits dissociate and the UvrB-DNA preincision complex is formed. This complex is subsequently bound by UvrC and the second UvrB is released. If no lesion is found, the DNA wraps around the other UvrB subunit that will check the other stand for damage. This Pseudomonas syringae pv. tomato (strain ATCC BAA-871 / DC3000) protein is UvrABC system protein B.